The sequence spans 92 residues: Large ribosomal subunit protein eL43 (92 aa).

The C4-type zinc-finger motif lies at 39 to 60; that stretch reads CQFCGKDAMKRQAVGIWGCKSC.

This sequence belongs to the eukaryotic ribosomal protein eL43 family.

This Cryptochiton stelleri (Giant gumboot chiton) protein is Large ribosomal subunit protein eL43 (RPL37A).